The chain runs to 511 residues: Steroid 17-alpha-hydroxylase/17,20 lyase (511 aa).

Cys442 contacts heme.

It belongs to the cytochrome P450 family. The cofactor is heme.

The protein localises to the endoplasmic reticulum membrane. It localises to the microsome membrane. It catalyses the reaction a C21-steroid + reduced [NADPH--hemoprotein reductase] + O2 = a 17alpha-hydroxy-C21-steroid + oxidized [NADPH--hemoprotein reductase] + H2O + H(+). The catalysed reaction is progesterone + reduced [NADPH--hemoprotein reductase] + O2 = 17alpha-hydroxyprogesterone + oxidized [NADPH--hemoprotein reductase] + H2O + H(+). It carries out the reaction pregnenolone + reduced [NADPH--hemoprotein reductase] + O2 = 17alpha-hydroxypregnenolone + oxidized [NADPH--hemoprotein reductase] + H2O + H(+). The enzyme catalyses 17alpha-hydroxyprogesterone + reduced [NADPH--hemoprotein reductase] + O2 = androst-4-ene-3,17-dione + acetate + oxidized [NADPH--hemoprotein reductase] + H2O + 2 H(+). It catalyses the reaction 17alpha-hydroxyprogesterone + reduced [NADPH--hemoprotein reductase] + O2 = 16alpha,17alpha-dihydroxyprogesterone + oxidized [NADPH--hemoprotein reductase] + H2O + H(+). The catalysed reaction is 16alpha,17alpha-dihydroxyprogesterone + reduced [NADPH--hemoprotein reductase] + O2 = 6beta,16alpha,17alpha-trihydroxyprogesterone + oxidized [NADPH--hemoprotein reductase] + H2O + H(+). It carries out the reaction 17alpha-hydroxypregnenolone + reduced [NADPH--hemoprotein reductase] + O2 = 3beta-hydroxyandrost-5-en-17-one + acetate + oxidized [NADPH--hemoprotein reductase] + H2O + 2 H(+). The enzyme catalyses 16alpha,17alpha-dihydroxypregnenolone + reduced [NADPH--hemoprotein reductase] + O2 = 3beta,16alpha-dihydroxy-androst-5-en-17-one + acetate + oxidized [NADPH--hemoprotein reductase] + H2O + 2 H(+). It catalyses the reaction 3beta-hydroxyandrost-5-en-17-one + reduced [NADPH--hemoprotein reductase] + O2 = 3beta,16alpha-dihydroxy-androst-5-en-17-one + oxidized [NADPH--hemoprotein reductase] + H2O + H(+). The catalysed reaction is androst-4-ene-3,17-dione + reduced [NADPH--hemoprotein reductase] + O2 = 16alpha-hydroxyandrost-4-ene-3,17-dione + oxidized [NADPH--hemoprotein reductase] + H2O + H(+). The protein operates within steroid hormone biosynthesis. It functions in the pathway steroid biosynthesis; glucocorticoid biosynthesis. With respect to regulation, regulated predominantly by intracellular cAMP levels. The 17,20-lyase activity is stimulated by cytochrome b5, which acts as an allosteric effector increasing the Vmax of the lyase activity. Functionally, a cytochrome P450 monooxygenase involved in corticoid and androgen biosynthesis. Catalyzes 17-alpha hydroxylation of C21 steroids, which is common for both pathways. A second oxidative step, required only for androgen synthesis, involves an acyl-carbon cleavage. The 17-alpha hydroxy intermediates, as part of adrenal glucocorticoids biosynthesis pathway, are precursors of cortisol. Hydroxylates steroid hormones, pregnenolone and progesterone to form 17-alpha hydroxy metabolites, followed by the cleavage of the C17-C20 bond to form C19 steroids, dehydroepiandrosterone (DHEA) and androstenedione. Has 16-alpha hydroxylase activity. Catalyzes 16-alpha hydroxylation of 17-alpha hydroxy pregnenolone, followed by the cleavage of the C17-C20 bond to form 16-alpha-hydroxy DHEA. Also 16-alpha hydroxylates androgens, relevant for estriol synthesis. Mechanistically, uses molecular oxygen inserting one oxygen atom into a substrate, and reducing the second into a water molecule, with two electrons provided by NADPH via cytochrome P450 reductase (CPR; NADPH-ferrihemoprotein reductase). The sequence is that of Steroid 17-alpha-hydroxylase/17,20 lyase (CYP17A1) from Mesocricetus auratus (Golden hamster).